A 149-amino-acid chain; its full sequence is Large ribosomal subunit protein uL11 (149 aa).

Belongs to the universal ribosomal protein uL11 family. Part of the ribosomal stalk of the 50S ribosomal subunit. Interacts with L10 and the large rRNA to form the base of the stalk. L10 forms an elongated spine to which L12 dimers bind in a sequential fashion forming a multimeric L10(L12)X complex. In terms of processing, one or more lysine residues are methylated.

Functionally, forms part of the ribosomal stalk which helps the ribosome interact with GTP-bound translation factors. This chain is Large ribosomal subunit protein uL11, found in Xanthobacter autotrophicus (strain ATCC BAA-1158 / Py2).